A 1228-amino-acid chain; its full sequence is Nitrate reductase alpha chain (1228 aa).

The 4Fe-4S Mo/W bis-MGD-type domain occupies 47 to 111 (DKVVRSTHGV…SFSWYIYSPL (65 aa)). The [4Fe-4S] cluster site is built by His-54, Cys-58, Cys-62, and Cys-97. Asp-227 serves as a coordination point for Mo-bis(molybdopterin guanine dinucleotide).

It belongs to the prokaryotic molybdopterin-containing oxidoreductase family. [4Fe-4S] cluster serves as cofactor. Requires Mo-bis(molybdopterin guanine dinucleotide) as cofactor.

The protein resides in the cell membrane. The catalysed reaction is nitrate + a quinol = a quinone + nitrite + H2O. Functionally, the alpha chain is the actual site of nitrate reduction. The protein is Nitrate reductase alpha chain (narG) of Bacillus subtilis (strain 168).